A 148-amino-acid chain; its full sequence is Deoxyuridine 5'-triphosphate nucleotidohydrolase (148 aa).

Substrate is bound by residues 67-69, N80, 84-86, and M94; these read RSG and LID.

It belongs to the dUTPase family. Requires Mg(2+) as cofactor.

It catalyses the reaction dUTP + H2O = dUMP + diphosphate + H(+). It functions in the pathway pyrimidine metabolism; dUMP biosynthesis; dUMP from dCTP (dUTP route): step 2/2. Its function is as follows. This enzyme is involved in nucleotide metabolism: it produces dUMP, the immediate precursor of thymidine nucleotides and it decreases the intracellular concentration of dUTP so that uracil cannot be incorporated into DNA. In Burkholderia lata (strain ATCC 17760 / DSM 23089 / LMG 22485 / NCIMB 9086 / R18194 / 383), this protein is Deoxyuridine 5'-triphosphate nucleotidohydrolase.